Consider the following 340-residue polypeptide: Nicotinate-nucleotide--dimethylbenzimidazole phosphoribosyltransferase (340 aa).

Glu305 acts as the Proton acceptor in catalysis.

This sequence belongs to the CobT family.

It catalyses the reaction 5,6-dimethylbenzimidazole + nicotinate beta-D-ribonucleotide = alpha-ribazole 5'-phosphate + nicotinate + H(+). The protein operates within nucleoside biosynthesis; alpha-ribazole biosynthesis; alpha-ribazole from 5,6-dimethylbenzimidazole: step 1/2. In terms of biological role, catalyzes the synthesis of alpha-ribazole-5'-phosphate from nicotinate mononucleotide (NAMN) and 5,6-dimethylbenzimidazole (DMB). The polypeptide is Nicotinate-nucleotide--dimethylbenzimidazole phosphoribosyltransferase (Allorhizobium ampelinum (strain ATCC BAA-846 / DSM 112012 / S4) (Agrobacterium vitis (strain S4))).